Reading from the N-terminus, the 1391-residue chain is MNAITQRDSKSFTGRKRIRKSFARIGDVVPMPNLIDVQRASYEAFLQMNVHPDNRTPTGLQEVFRSVFPIDDFAGRGRLEFVNYELEEPKYDVEECIQRGMTFAAPLKVILRLIVWDVDEDTGSRSIRDIKEQPVYMGDMPLMTDNGTFIINGTERVIVSQMHRSPGVFFDHDKGKTHSSGKFLFAARVIPYRGSWLDFEFDSKDLVYVRIDRRRKLPVTTLLYALEGQRTEAAIASGTDPQDLPEIHGMTAEEILSYFYTQVVFTSTPKGWARPFDPEAFRGITLAEALIDADTGTVVAEAGTKLTARSARKIAEQAKTVLVGRADLLGRYMAEDLVNDQTGEIYAEAGEELTEARLAALETLGVTSLPTLAVDQTTGPWIRNTLAIDKNSTRDDALIDIYRVMRPGEPPTPETAEALFRGLFFDMDRYDLSSVGRVKMNMRLGVDAPDTVRTLRKEDILRTVKILCDLKDGRGAIDDIDNLGNRRVRSVGELMENQYRLGLLRMERAIRERMGSVDIDTVMPHDLINAKPAAAAVREFFGSSQLSQFMDQTNPLSEVTHKRRLSALGPGGLTRERAGFEVRDVHPTHYGRICPIETPEGPNIGLINSLATYAKVNKYGFIETPYRMVEDGKVSDQWRYLSAMEEDRLVVAQADAPRDSTGKLTEELISVRRQGDFRLVKPEDVTSMDVSPKQLVSVAAALIPFLENDDANRALMGSNMQRQAVPLIRADAPLVGTGMEAAVARDSGATIVARRAGVVDQIDGARIVVRASGEDGATQGVDIYRLRKFMRSNQSTCINQRPLVKVGDHVISGDIIADGPSTELGELALGRNVLCAFMPWNGYNFEDSILISERIARDDVFTSIHIEEFEVMARDTKLGQEEITRDIPNVGEEALRNLDEAGIVYIGAEVNPGDILVGKVTPKGESPMTPEEKLLRAIFGEKASDVRDTSLKLPPGTTGTIVDVRVFSRRGVDKDERAMAIERAEIERLAKDRDDERGIQERAFLNRLREKLMGHPASGGFKGIKAGTIITDEVLAEHPRGAWRNISVQDDAVVADIELLKREFDAAVAKIQARFEGKVEKLQRGDELPPGVMKMVKVFVAVKRKLQPGDKMAGRHGNKGVVSRVVPVEDMPFLEDGTPVDLVLNPLGVPSRMNVGQILETHLGWACANLGRQIGELVEDYRRNGQQRDELLSRLREIYGENVYNDVIADMNNDQLIELAENLRKGVPIATPVFDGARPSDIENMLSRAGLDTSGQVVLTDGRTGEPFERKVTVGYIYMLKLHHLVDDKIHARSIGPYSLVTQQPLGGKAQFGGQRFGEMEVWALEAYGAAYTLQEMLTVKSDDVSGRTKVYEAIVRDQDSFEAGIPESFNVLMKELKSLGLNVDLENRSA.

This sequence belongs to the RNA polymerase beta chain family. The RNAP catalytic core consists of 2 alpha, 1 beta, 1 beta' and 1 omega subunit. When a sigma factor is associated with the core the holoenzyme is formed, which can initiate transcription.

The catalysed reaction is RNA(n) + a ribonucleoside 5'-triphosphate = RNA(n+1) + diphosphate. Its function is as follows. DNA-dependent RNA polymerase catalyzes the transcription of DNA into RNA using the four ribonucleoside triphosphates as substrates. This Granulibacter bethesdensis (strain ATCC BAA-1260 / CGDNIH1) protein is DNA-directed RNA polymerase subunit beta.